The primary structure comprises 324 residues: Methyltransferase pytC (324 aa).

The protein belongs to the methyltransferase superfamily. LaeA methyltransferase family.

The protein operates within secondary metabolite biosynthesis. In terms of biological role, methyltransferase; part of the gene cluster that mediates the biosynthesis of pyranterreones, a family of antioxidative compounds. The first step of pyranonigrins biosynthesis is performed by the hybrid PKS-NRPS synthetase pytA that condenses 4 malonyl-CoA units ato the acetyl starter unit by the modular PKS of pytA. The acyl chain is then connected to an L-serine through the amide bond by the modular NRPS of pytA. A tetramic acid is formed and released from the PKS-NRPS pytA to give pyranterreone 5 with the help of the thioesterase pytI. Pyranterreone 5 could be methylated by pytC to afford pyranterreone 6. Both pyranterreones 5 and 6 are subsequently oxidized by the FAD-linked oxidoreductase pytB and the cytochrome P450 monooxygenase pytD to form the fused gamma-pyrone core, resulting in pyranterreones 7 and 11, respectively. The hydroxy group at C-8 of pyranterreones 7 and 11 are dehydrated by the aspartyl protease pytH to form a delta-7 double bond to give pyranterreones 3 and 1, 2 accordingly. The exo-methylene of pyranterreone 3 could be reduced into a pendant methyl by reductase pytE to provide pyranterreone 4, also known as cordylactam. Pyranterreone 4 can be reconverted to pyranterreone 3 through pytB-catalyzed dehydrogenation or further oxidized to pyranterreones 9 and 10. This Aspergillus terreus (strain NIH 2624 / FGSC A1156) protein is Methyltransferase pytC.